A 359-amino-acid chain; its full sequence is Heat-inducible transcription repressor HrcA (359 aa).

Belongs to the HrcA family.

Functionally, negative regulator of class I heat shock genes (grpE-dnaK-dnaJ and groELS operons). Prevents heat-shock induction of these operons. This is Heat-inducible transcription repressor HrcA from Roseiflexus sp. (strain RS-1).